The primary structure comprises 437 residues: ATP-dependent protease ATPase subunit HslU (437 aa).

Residues Val18, 60-65, Asp250, Glu315, and Arg387 each bind ATP; that span reads GCGKTE.

Belongs to the ClpX chaperone family. HslU subfamily. In terms of assembly, a double ring-shaped homohexamer of HslV is capped on each side by a ring-shaped HslU homohexamer. The assembly of the HslU/HslV complex is dependent on binding of ATP.

The protein localises to the cytoplasm. Functionally, ATPase subunit of a proteasome-like degradation complex; this subunit has chaperone activity. The binding of ATP and its subsequent hydrolysis by HslU are essential for unfolding of protein substrates subsequently hydrolyzed by HslV. HslU recognizes the N-terminal part of its protein substrates and unfolds these before they are guided to HslV for hydrolysis. This is ATP-dependent protease ATPase subunit HslU from Methylorubrum extorquens (strain PA1) (Methylobacterium extorquens).